The chain runs to 354 residues: Guanine nucleotide-binding protein G(t) subunit alpha-3 (354 aa).

The tract at residues 1-26 is disordered; the sequence is MGIGISSESKESAKRSKELEKKLQED. Glycine 2 carries the N-myristoyl glycine lipid modification. Residues 8-26 are compositionally biased toward basic and acidic residues; that stretch reads ESKESAKRSKELEKKLQED. Residues 32-354 enclose the G-alpha domain; the sequence is RTVKLLLLGA…KENLKDCGLF (323 aa). The interval 35–48 is G1 motif; the sequence is KLLLLGAGESGKST. GTP contacts are provided by residues 40–47, 175–181, 200–204, 269–272, and alanine 326; these read GAGESGKS, LHSRVKT, DVGGQ, and NKKD. Mg(2+) contacts are provided by serine 47 and threonine 181. Residues 173-181 form a G2 motif region; it reads DVLHSRVKT. The interval 196–205 is G3 motif; that stretch reads FRMFDVGGQR. The tract at residues 265–272 is G4 motif; it reads VLFLNKKD. The tract at residues 324–329 is G5 motif; the sequence is TCATDT.

Belongs to the G-alpha family. G(i/o/t/z) subfamily. G proteins are composed of 3 units; alpha, beta and gamma, respectively GNAT3, GNB1 and GNG13 for Gustducin heterotrimer for bitter taste transduction. The alpha chain contains the guanine nucleotide binding site. Component of the TAS2R14-GNAT3 complex, consisting of TAS2R14, GNAT3, GNB1 and GNG2; within the complex interacts with TAS2R14; this complex plays a role in the perception of bitterness. Gustducin heterotrimer may also be composed of GNAT3, GNB3 and GNG13. As to expression, expressed in epithelial cells of taste buds of the circumvallate, foliate and fungiform. Detected in various region of the respiratory track. Expressed also in spermatozoa.

Its subcellular location is the cytoplasm. Its function is as follows. Guanine nucleotide-binding protein (G protein) alpha subunit playing a prominent role in bitter and sweet taste transduction as well as in umami (monosodium glutamate, monopotassium glutamate, and inosine monophosphate) taste transduction. This Bos taurus (Bovine) protein is Guanine nucleotide-binding protein G(t) subunit alpha-3 (GNAT3).